Here is a 467-residue protein sequence, read N- to C-terminus: Pachytene checkpoint protein 2 homolog (467 aa).

An ATP-binding site is contributed by 209–216 (GPPGTGKT).

The protein belongs to the AAA ATPase family. PCH2 subfamily.

The protein localises to the chromosome. Functionally, plays a key role in chromosome recombination during meiosis. Mediates meiotic chromosome remodeling and crossover maturation. This chain is Pachytene checkpoint protein 2 homolog, found in Arabidopsis thaliana (Mouse-ear cress).